The sequence spans 566 residues: Peroxisomal leader peptide-processing protease (566 aa).

The interval 319 to 531 is serine protease; that stretch reads ALAALLPPEV…LQPALQQYSQ (213 aa). Residues His372, Asp408, and Ser481 each act as charge relay system in the active site.

Belongs to the peptidase S1B family. Homodimer. Forms a heterodimer with the C-terminal cleavage product (45 kDa form). Forms a heterodimer with the N-terminal cleavage product (15 kDa form). Interacts with PEX5. Interacts with LONP2. Post-translationally, self-cleavage gives rise to an N-terminal 15-kDa fragment and C-terminal 45-kDa fragment upon import into the peroxisomes. The full-lengh TYSND1 is the active the proteolytic processing of PTS1- and PTS2-proteins and in self-cleavage, and intermolecular self-cleavage of TYSND1 down-regulates its protease activity.

The protein localises to the peroxisome. In terms of biological role, peroxisomal protease that mediates both the removal of the leader peptide from proteins containing a PTS2 target sequence and processes several PTS1-containing proteins. Catalyzes the processing of PTS1-proteins involved in the peroxisomal beta-oxidation of fatty acids. This chain is Peroxisomal leader peptide-processing protease (TYSND1), found in Homo sapiens (Human).